The following is a 577-amino-acid chain: Aspartate--tRNA(Asp/Asn) ligase (577 aa).

Glu171 provides a ligand contact to L-aspartate. The segment at 195–198 (QLFK) is aspartate. Arg217 provides a ligand contact to L-aspartate. Residues 217 to 219 (RDE) and Gln226 each bind ATP. His444 contributes to the L-aspartate binding site. Residue Glu474 participates in ATP binding. Residue Arg481 participates in L-aspartate binding. 526–529 (GFDR) contributes to the ATP binding site.

It belongs to the class-II aminoacyl-tRNA synthetase family. Type 1 subfamily. As to quaternary structure, homodimer.

It is found in the cytoplasm. It carries out the reaction tRNA(Asx) + L-aspartate + ATP = L-aspartyl-tRNA(Asx) + AMP + diphosphate. In terms of biological role, aspartyl-tRNA synthetase with relaxed tRNA specificity since it is able to aspartylate not only its cognate tRNA(Asp) but also tRNA(Asn). Reaction proceeds in two steps: L-aspartate is first activated by ATP to form Asp-AMP and then transferred to the acceptor end of tRNA(Asp/Asn). In Helicobacter pylori (strain HPAG1), this protein is Aspartate--tRNA(Asp/Asn) ligase.